The primary structure comprises 387 residues: 3-ketoacyl-CoA thiolase (387 aa).

Cysteine 91 (acyl-thioester intermediate) is an active-site residue. Catalysis depends on proton acceptor residues histidine 343 and cysteine 373.

It belongs to the thiolase-like superfamily. Thiolase family. Heterotetramer of two alpha chains (FadB) and two beta chains (FadA).

The protein localises to the cytoplasm. It catalyses the reaction an acyl-CoA + acetyl-CoA = a 3-oxoacyl-CoA + CoA. Its pathway is lipid metabolism; fatty acid beta-oxidation. Functionally, catalyzes the final step of fatty acid oxidation in which acetyl-CoA is released and the CoA ester of a fatty acid two carbons shorter is formed. The protein is 3-ketoacyl-CoA thiolase of Aeromonas hydrophila subsp. hydrophila (strain ATCC 7966 / DSM 30187 / BCRC 13018 / CCUG 14551 / JCM 1027 / KCTC 2358 / NCIMB 9240 / NCTC 8049).